A 143-amino-acid chain; its full sequence is Hemoglobin subunit alpha-1 (143 aa).

Position 2 is an N-acetylserine (serine 2). The Globin domain maps to 2-143; the sequence is SLSAKDKATV…LALALCEKYR (142 aa). Residue histidine 60 participates in O2 binding. Histidine 89 provides a ligand contact to heme b.

It belongs to the globin family. In terms of assembly, hb 1 is a heterotetramer of two alpha-1 and two beta-1 chains. In terms of tissue distribution, red blood cells.

Involved in oxygen transport from gills to the various peripheral tissues. This chain is Hemoglobin subunit alpha-1 (hba1), found in Boreogadus saida (Polar cod).